The sequence spans 341 residues: Ribosomal RNA small subunit methyltransferase C (341 aa).

It belongs to the methyltransferase superfamily. RsmC family. Monomer.

It localises to the cytoplasm. The catalysed reaction is guanosine(1207) in 16S rRNA + S-adenosyl-L-methionine = N(2)-methylguanosine(1207) in 16S rRNA + S-adenosyl-L-homocysteine + H(+). In terms of biological role, specifically methylates the guanine in position 1207 of 16S rRNA in the 30S particle. The protein is Ribosomal RNA small subunit methyltransferase C of Pseudoalteromonas translucida (strain TAC 125).